The chain runs to 395 residues: Capsid protein (395 aa).

Basic residues predominate over residues 1–41 (MARKYAKRSKSRPRTARRSPKSRSRPRSRAPRRKAPSRPRI). Positions 1 to 51 (MARKYAKRSKSRPRTARRSPKSRSRPRSRAPRRKAPSRPRIQRVNPVRRPM) are disordered. Residues 2–9 (ARKYAKRS) carry the Nuclear localization signal motif.

The protein resides in the host nucleus. Its subcellular location is the virion. In terms of biological role, self-assembles to form the virion icosahedral capsid. The polypeptide is Capsid protein (Chaetoceros setoense (Chaetoceros setoense DNA virus)).